A 47-amino-acid chain; its full sequence is Defensin-like protein 1 (47 aa).

4 disulfides stabilise this stretch: Cys3-Cys47, Cys14-Cys34, Cys20-Cys41, and Cys24-Cys43.

As to quaternary structure, monomer and homodimer.

In terms of biological role, inhibits trypsin but not chymotrypsin. The polypeptide is Defensin-like protein 1 (Vigna unguiculata (Cowpea)).